The following is a 175-amino-acid chain: Co-chaperone protein HscB homolog (175 aa).

One can recognise a J domain in the interval 7 to 79 (SHFDLFHLPA…LKRASYLLSL (73 aa)).

It belongs to the HscB family. As to quaternary structure, interacts with HscA and stimulates its ATPase activity.

Functionally, co-chaperone involved in the maturation of iron-sulfur cluster-containing proteins. Seems to help targeting proteins to be folded toward HscA. The protein is Co-chaperone protein HscB homolog of Burkholderia cenocepacia (strain ATCC BAA-245 / DSM 16553 / LMG 16656 / NCTC 13227 / J2315 / CF5610) (Burkholderia cepacia (strain J2315)).